The sequence spans 477 residues: Methionine aminopeptidase 2 (477 aa).

Residues 1 to 121 form a disordered region; sequence MAGVEEAASC…TDPPSVPICD (121 aa). Ala-2 is modified (N-acetylalanine). Positions 36–46 are enriched in basic residues; sequence KKKKRKKKKSK. Ser-45 bears the Phosphoserine mark. Over residues 54 to 78 the composition is skewed to basic and acidic residues; it reads EPDKEAGASVDEVTRQLERQALEEK. Position 62 is a phosphoserine; alternate (Ser-62). The O-linked (GlcNAc) serine; alternate glycan is linked to Ser-62. Acidic residues predominate over residues 79 to 91; it reads EKDDDDEDGDGDG. Basic residues predominate over residues 96-108; it reads GKKKKKKKKKRGP. His-230 lines the substrate pocket. A divalent metal cation-binding residues include Asp-250, Asp-261, and His-330. Position 338 (His-338) interacts with substrate. A divalent metal cation is bound by residues Glu-363 and Glu-458.

This sequence belongs to the peptidase M24A family. Methionine aminopeptidase eukaryotic type 2 subfamily. Binds EIF2S1 at low magnesium concentrations. Interacts strongly with the eIF-2 gamma-subunit EIF2S3. It depends on Co(2+) as a cofactor. Requires Zn(2+) as cofactor. Mn(2+) is required as a cofactor. The cofactor is Fe(2+). Contains approximately 12 O-linked N-acetylglucosamine (GlcNAc) residues. O-glycosylation is required for EIF2S1 binding.

The protein localises to the cytoplasm. It catalyses the reaction Release of N-terminal amino acids, preferentially methionine, from peptides and arylamides.. Its function is as follows. Cotranslationally removes the N-terminal methionine from nascent proteins. The N-terminal methionine is often cleaved when the second residue in the primary sequence is small and uncharged (Met-Ala-, Cys, Gly, Pro, Ser, Thr, or Val). Protects eukaryotic initiation factor EIF2S1 from translation-inhibiting phosphorylation by inhibitory kinases such as EIF2AK2/PKR and EIF2AK1/HCR. Plays a critical role in the regulation of protein synthesis. The chain is Methionine aminopeptidase 2 from Bos taurus (Bovine).